The following is a 399-amino-acid chain: MNELEFHPHADRRTGSHTMEYQHLGVVPVVSAQANSTPLGGCTLSDGVIRAMGDAARFHVDMEQLWQAAGSFLAEATGSEDACPVTGAAAGMAIAVAACVAGTDGLRVQRLPDPGDQPNEIVLQKGHSISYGGAPLAQMIALGGGRAVEVGAVNETPRSHVASAVTRRTAALVYVTSRTHAVHRKGVPLDELVAIGREHGVPVIVDAAGEGGLRRWVASGADLVIYSGPKMLGAPTSGFICGRGDLVAACRAQYSGIARPMKVGKENLLGLLQAVREYTAVPEEQRAAEQLERMTKLAARLDKIPGLSARTAQDDSGRTIYRVLLTVDPAAAGRSAATLAEEMRAGIPSIYLRDFKLHLGQLEVDPRALSPDGEESVVRRLEELLLDHGGAPTGMEDAR.

Position 179 (Thr179) interacts with phosphate. Lys230 carries the post-translational modification N6-(pyridoxal phosphate)lysine. The phosphate site is built by Arg318, Arg322, Arg353, and Arg367.

This sequence belongs to the SelA family. In terms of assembly, homooctamer; tetramer of homodimers. Pyridoxal 5'-phosphate is required as a cofactor.

The enzyme catalyses (5'S,6'R)-C-glycyluridine + O2 = uridine-5'-carboxamide + CO2 + H2O. It functions in the pathway antibiotic biosynthesis. Activity is dependent on phosphate. Monooxygenase-decarboxylase involved in the biosynthesis of the capuramycin-type nucleoside antibiotic A-503083. Catalyzes the oxidative decarboxylation of 5'-C-glycyluridine (GlyU) to uridine-5'-carboxamide (CarU). Is stereospecific for the (5'S,6'R)-diastereomer of GlyU. Directly incorporates a single oxygen atom from O(2) into the product CarU. In Streptomyces sp, this protein is 5'-C-glycyluridine monooxygenase-decarboxylase.